The primary structure comprises 269 residues: Phosphate import ATP-binding protein PstB 1 (269 aa).

Residues 25–264 (LSTEDLHVFY…PQVDLTNDYI (240 aa)) enclose the ABC transporter domain. ATP is bound at residue 57 to 64 (GPSGSGKS).

It belongs to the ABC transporter superfamily. Phosphate importer (TC 3.A.1.7) family. The complex is composed of two ATP-binding proteins (PstB), two transmembrane proteins (PstC and PstA) and a solute-binding protein (PstS).

The protein resides in the cell membrane. It catalyses the reaction phosphate(out) + ATP + H2O = ADP + 2 phosphate(in) + H(+). In terms of biological role, part of the ABC transporter complex PstSACB involved in phosphate import. Responsible for energy coupling to the transport system. In Lactiplantibacillus plantarum (strain ATCC BAA-793 / NCIMB 8826 / WCFS1) (Lactobacillus plantarum), this protein is Phosphate import ATP-binding protein PstB 1.